Reading from the N-terminus, the 429-residue chain is Enolase (429 aa).

Residue Gln167 participates in (2R)-2-phosphoglycerate binding. Catalysis depends on Glu209, which acts as the Proton donor. Mg(2+) contacts are provided by Asp246, Glu289, and Asp316. Positions 341, 370, 371, and 392 each coordinate (2R)-2-phosphoglycerate. The active-site Proton acceptor is the Lys341.

Belongs to the enolase family. In terms of assembly, component of the RNA degradosome, a multiprotein complex involved in RNA processing and mRNA degradation. Requires Mg(2+) as cofactor.

The protein localises to the cytoplasm. The protein resides in the secreted. It is found in the cell surface. The catalysed reaction is (2R)-2-phosphoglycerate = phosphoenolpyruvate + H2O. It functions in the pathway carbohydrate degradation; glycolysis; pyruvate from D-glyceraldehyde 3-phosphate: step 4/5. Its function is as follows. Catalyzes the reversible conversion of 2-phosphoglycerate (2-PG) into phosphoenolpyruvate (PEP). It is essential for the degradation of carbohydrates via glycolysis. This is Enolase from Pseudomonas entomophila (strain L48).